The sequence spans 702 residues: Elongation factor G 2 (702 aa).

One can recognise a tr-type G domain in the interval 8-291 (ELYRNIGIVA…AVIDYLPAPS (284 aa)). GTP contacts are provided by residues 17–24 (AHVDAGKT), 89–93 (DTPGH), and 143–146 (NKMD). The tract at residues 293 to 314 (IPAIRGTDPDDEEKHDERHADD) is disordered.

This sequence belongs to the TRAFAC class translation factor GTPase superfamily. Classic translation factor GTPase family. EF-G/EF-2 subfamily.

The protein localises to the cytoplasm. Catalyzes the GTP-dependent ribosomal translocation step during translation elongation. During this step, the ribosome changes from the pre-translocational (PRE) to the post-translocational (POST) state as the newly formed A-site-bound peptidyl-tRNA and P-site-bound deacylated tRNA move to the P and E sites, respectively. Catalyzes the coordinated movement of the two tRNA molecules, the mRNA and conformational changes in the ribosome. This Pseudomonas aeruginosa (strain ATCC 15692 / DSM 22644 / CIP 104116 / JCM 14847 / LMG 12228 / 1C / PRS 101 / PAO1) protein is Elongation factor G 2 (fusB).